The primary structure comprises 122 residues: Large ribosomal subunit protein uL14c (122 aa).

This sequence belongs to the universal ribosomal protein uL14 family. Part of the 50S ribosomal subunit.

The protein resides in the plastid. Its subcellular location is the cyanelle. Its function is as follows. Binds to 23S rRNA. This is Large ribosomal subunit protein uL14c from Cyanophora paradoxa.